The following is a 234-amino-acid chain: tRNA (guanine-N(1)-)-methyltransferase (234 aa).

S-adenosyl-L-methionine-binding positions include glycine 115 and 135–140 (VGDYIL).

The protein belongs to the RNA methyltransferase TrmD family. Homodimer.

The protein localises to the cytoplasm. It catalyses the reaction guanosine(37) in tRNA + S-adenosyl-L-methionine = N(1)-methylguanosine(37) in tRNA + S-adenosyl-L-homocysteine + H(+). Its function is as follows. Specifically methylates guanosine-37 in various tRNAs. This chain is tRNA (guanine-N(1)-)-methyltransferase, found in Rickettsia africae (strain ESF-5).